We begin with the raw amino-acid sequence, 377 residues long: PqqA peptide cyclase (377 aa).

In terms of domain architecture, Radical SAM core spans 12 to 228 (FGIPLAVLLE…EAARERLKGQ (217 aa)). Cysteine 26, cysteine 30, and cysteine 33 together coordinate [4Fe-4S] cluster.

It belongs to the radical SAM superfamily. PqqE family. In terms of assembly, interacts with PqqD. The interaction is necessary for activity of PqqE. It depends on [4Fe-4S] cluster as a cofactor.

The catalysed reaction is [PQQ precursor protein] + S-adenosyl-L-methionine = E-Y cross-linked-[PQQ precursor protein] + 5'-deoxyadenosine + L-methionine + H(+). It participates in cofactor biosynthesis; pyrroloquinoline quinone biosynthesis. Catalyzes the cross-linking of a glutamate residue and a tyrosine residue in the PqqA protein as part of the biosynthesis of pyrroloquinoline quinone (PQQ). The polypeptide is PqqA peptide cyclase (Rhodopseudomonas palustris (strain ATCC BAA-98 / CGA009)).